We begin with the raw amino-acid sequence, 297 residues long: Protoheme IX farnesyltransferase (297 aa).

9 helical membrane-spanning segments follow: residues 16–36 (VVAL…PGVP), 45–65 (VLGF…NQLL), 93–113 (VFAS…VNLI), 114–134 (TAVL…VYLK), 141–161 (IVIG…AVTG), 172–192 (SLLV…LAIF), 223–243 (VVLA…AFYL), 244–264 (GGAI…LDPP), and 277–297 (IVYL…LPWL).

It belongs to the UbiA prenyltransferase family. Protoheme IX farnesyltransferase subfamily.

The protein resides in the cell inner membrane. It catalyses the reaction heme b + (2E,6E)-farnesyl diphosphate + H2O = Fe(II)-heme o + diphosphate. It participates in porphyrin-containing compound metabolism; heme O biosynthesis; heme O from protoheme: step 1/1. Its function is as follows. Converts heme B (protoheme IX) to heme O by substitution of the vinyl group on carbon 2 of heme B porphyrin ring with a hydroxyethyl farnesyl side group. The chain is Protoheme IX farnesyltransferase from Stenotrophomonas maltophilia (strain R551-3).